The chain runs to 635 residues: Biosynthetic arginine decarboxylase (635 aa).

Position 100 is an N6-(pyridoxal phosphate)lysine (lysine 100). 282–292 is a substrate binding site; sequence VDIGGGLGVDY.

It belongs to the Orn/Lys/Arg decarboxylase class-II family. SpeA subfamily. The cofactor is Mg(2+). Pyridoxal 5'-phosphate serves as cofactor.

It catalyses the reaction L-arginine + H(+) = agmatine + CO2. The protein operates within amine and polyamine biosynthesis; agmatine biosynthesis; agmatine from L-arginine: step 1/1. Catalyzes the biosynthesis of agmatine from arginine. In Geotalea daltonii (strain DSM 22248 / JCM 15807 / FRC-32) (Geobacter daltonii), this protein is Biosynthetic arginine decarboxylase.